The following is a 290-amino-acid chain: MEWSLTQNKLLAFHRLMRTDKPIGALLLLWPTLWALWVATPGVPQLWILAVFVAGVWLMRAAGCVVNDYADRKFDGHVKRTANRPLPSGAVTEKEARALFVVLVLISFLLVLTLNTMTILLSIAALALAWVYPFMKRYTHLPQVVLGAAFGWSIPMAFAAVSESVPLSCWLMFLANILWAVAYDTQYAMVDRDDDVKIGIKSTAILFGQYDKLIIGILQIGVLALMAIIGELNGLGWGYYWSIVVAGALFVYQQKLIANREREACFKAFMNNNYVGLVLFLGLAMSYWHF.

Transmembrane regions (helical) follow at residues 23-43 (IGAL…TPGV), 46-66 (LWIL…GCVV), 99-119 (LFVV…TMTI), 141-161 (LPQV…FAAV), 163-183 (ESVP…AVAY), 213-233 (LIIG…GELN), 234-254 (GLGW…VYQQ), and 268-288 (AFMN…MSYW).

It belongs to the UbiA prenyltransferase family. The cofactor is Mg(2+).

It is found in the cell inner membrane. The enzyme catalyses all-trans-octaprenyl diphosphate + 4-hydroxybenzoate = 4-hydroxy-3-(all-trans-octaprenyl)benzoate + diphosphate. It participates in cofactor biosynthesis; ubiquinone biosynthesis. Its function is as follows. Catalyzes the prenylation of para-hydroxybenzoate (PHB) with an all-trans polyprenyl group. Mediates the second step in the final reaction sequence of ubiquinone-8 (UQ-8) biosynthesis, which is the condensation of the polyisoprenoid side chain with PHB, generating the first membrane-bound Q intermediate 3-octaprenyl-4-hydroxybenzoate. This chain is 4-hydroxybenzoate octaprenyltransferase, found in Escherichia coli (strain SE11).